We begin with the raw amino-acid sequence, 151 residues long: Ribosome maturation factor RimP (151 aa).

This sequence belongs to the RimP family.

It is found in the cytoplasm. Functionally, required for maturation of 30S ribosomal subunits. The chain is Ribosome maturation factor RimP from Caldicellulosiruptor bescii (strain ATCC BAA-1888 / DSM 6725 / KCTC 15123 / Z-1320) (Anaerocellum thermophilum).